We begin with the raw amino-acid sequence, 199 residues long: dITP/XTP pyrophosphatase (199 aa).

12–17 contributes to the substrate binding site; it reads SGNAGK. Asp-73 acts as the Proton acceptor in catalysis. Mg(2+) is bound at residue Asp-73. Residues Ser-74, 157-160, Lys-180, and 185-186 each bind substrate; these read FGYD and HR.

Belongs to the HAM1 NTPase family. As to quaternary structure, homodimer. Requires Mg(2+) as cofactor.

The enzyme catalyses XTP + H2O = XMP + diphosphate + H(+). It catalyses the reaction dITP + H2O = dIMP + diphosphate + H(+). The catalysed reaction is ITP + H2O = IMP + diphosphate + H(+). Pyrophosphatase that catalyzes the hydrolysis of nucleoside triphosphates to their monophosphate derivatives, with a high preference for the non-canonical purine nucleotides XTP (xanthosine triphosphate), dITP (deoxyinosine triphosphate) and ITP. Seems to function as a house-cleaning enzyme that removes non-canonical purine nucleotides from the nucleotide pool, thus preventing their incorporation into DNA/RNA and avoiding chromosomal lesions. This chain is dITP/XTP pyrophosphatase, found in Neisseria meningitidis serogroup B (strain ATCC BAA-335 / MC58).